The following is a 68-amino-acid chain: Large ribosomal subunit protein bL35 (68 aa).

The protein belongs to the bacterial ribosomal protein bL35 family.

This chain is Large ribosomal subunit protein bL35, found in Orientia tsutsugamushi (strain Boryong) (Rickettsia tsutsugamushi).